The following is a 184-amino-acid chain: NADH-quinone oxidoreductase subunit B (184 aa).

Residues Cys-37, Cys-38, Cys-103, and Cys-132 each coordinate [4Fe-4S] cluster. The interval 164 to 184 (HEREEAAKHALPTHSMKGLLR) is disordered.

Belongs to the complex I 20 kDa subunit family. NDH-1 is composed of 14 different subunits. Subunits NuoB, C, D, E, F, and G constitute the peripheral sector of the complex. [4Fe-4S] cluster is required as a cofactor.

The protein localises to the cell membrane. The enzyme catalyses a quinone + NADH + 5 H(+)(in) = a quinol + NAD(+) + 4 H(+)(out). Its function is as follows. NDH-1 shuttles electrons from NADH, via FMN and iron-sulfur (Fe-S) centers, to quinones in the respiratory chain. The immediate electron acceptor for the enzyme in this species is believed to be a menaquinone. Couples the redox reaction to proton translocation (for every two electrons transferred, four hydrogen ions are translocated across the cytoplasmic membrane), and thus conserves the redox energy in a proton gradient. This Acidothermus cellulolyticus (strain ATCC 43068 / DSM 8971 / 11B) protein is NADH-quinone oxidoreductase subunit B.